A 329-amino-acid chain; its full sequence is VSG expression site-associated protein 221A (329 aa).

A signal peptide spans 1–23 (MKVEIVELVVLLFSVTCVDAWLQ). Residues asparagine 73, asparagine 294, and asparagine 308 are each glycosylated (N-linked (GlcNAc...) asparagine).

Its function is as follows. Not known but may be related to activation of the variant surface glycoprotein genes. The chain is VSG expression site-associated protein 221A from Trypanosoma brucei brucei.